Consider the following 504-residue polypeptide: Cytochrome P450 2K4 (504 aa).

Cysteine 447 contacts heme.

It belongs to the cytochrome P450 family. Requires heme as cofactor.

The protein resides in the endoplasmic reticulum membrane. Its subcellular location is the microsome membrane. The enzyme catalyses an organic molecule + reduced [NADPH--hemoprotein reductase] + O2 = an alcohol + oxidized [NADPH--hemoprotein reductase] + H2O + H(+). This Oncorhynchus mykiss (Rainbow trout) protein is Cytochrome P450 2K4 (cyp2k4).